Consider the following 206-residue polypeptide: Small ribosomal subunit protein uS4 (206 aa).

Residues 96–156 (GRLDNVVYRM…EKAKKQSRVK (61 aa)) form the S4 RNA-binding domain.

It belongs to the universal ribosomal protein uS4 family. In terms of assembly, part of the 30S ribosomal subunit. Contacts protein S5. The interaction surface between S4 and S5 is involved in control of translational fidelity.

In terms of biological role, one of the primary rRNA binding proteins, it binds directly to 16S rRNA where it nucleates assembly of the body of the 30S subunit. With S5 and S12 plays an important role in translational accuracy. In Enterobacter sp. (strain 638), this protein is Small ribosomal subunit protein uS4.